A 109-amino-acid polypeptide reads, in one-letter code: MAMTDTEFHQLADDMFQAIESAIETAIDEQDADVDIDASGNVLQLEFVDGSKIVINKQEPLHEIWVATRFGGYHFGFVEGKWLDGRNGGEFMPFVQDSILRQGGIKLSF.

It belongs to the frataxin family.

Involved in iron-sulfur (Fe-S) cluster assembly. May act as a regulator of Fe-S biogenesis. In Shewanella putrefaciens (strain CN-32 / ATCC BAA-453), this protein is Iron-sulfur cluster assembly protein CyaY.